The chain runs to 358 residues: Zinc-type alcohol dehydrogenase-like protein YogA (358 aa).

This sequence belongs to the zinc-containing alcohol dehydrogenase family. Quinone oxidoreductase subfamily.

The protein operates within secondary metabolite biosynthesis. Its function is as follows. Zinc-type alcohol dehydrogenase-like protein; part of the gene cluster that mediates the biosynthesis of phomenoic acid, a long chain aliphatic carboxylic acid that does not appear to be essential for pathogenicity but may play a role in allowing to outcompete other fungi in the environmental niche via its antifungal properties. The polyketide synthase produces the long methylated aliphatic carboxylic acid chain of phomenoic acid. The cluster-specific cytochrome P450 monooxygenase may then hydroxylate the methyl group of carbon 31. The putative dehydrogenase YogA, which has no obvious role in phomenoic acid biosynthesis, may further modify phomenoic acid to produce a compound not identified yet. The chain is Zinc-type alcohol dehydrogenase-like protein YogA from Leptosphaeria maculans (strain JN3 / isolate v23.1.3 / race Av1-4-5-6-7-8) (Blackleg fungus).